A 459-amino-acid polypeptide reads, in one-letter code: MHNIHRRHFLKAAGAVTAGLVTANIALNANASSVAPKPRVGKSVIGLIAPKMELVRVGFIGVGERGFSHVEQFCHLEGVELKAICDTHQAVIDRAVEHIVNQNRPKPAVYTGNDLSYRELLNRDDIDIVIISTPWEWHAPMAIDTMESGKHAFVEVPLALTVEECWQLVDTAERTQKNCMMMENVNYGREELMVLNMVRQGVFGELLHGEAAYIHELRWQMKEIDHKTGSWRTYWHTKRNGNLYPTHGLGPISQYMNINRGDRFDYLTSMSSPALGRTLYAKREFPADHERNQLKYINGDMSTSLIKTVKGRTIMVQHDTTTPRPYSRHNLIQGTNGVFAGFPNRIAVEHGGFGKSYHEWDMDMQKWYDKYDHPLWQRIGKEAEINGGHGGMDFVMLWRMVYCLRNGEALDQDVYDGAAWSVVNILSEQSLNNRSNSVNFPDFTRGAWKHATPLGIVGA.

A signal peptide (tat-type signal) is located at residues 1–31 (MHNIHRRHFLKAAGAVTAGLVTANIALNANA). Residues 64-65 (ER), aspartate 86, 135-138 (WEWH), 155-156 (EV), and asparagine 184 contribute to the NAD(+) site. Substrate is bound by residues tyrosine 213, arginine 232, 244–247 (YPTH), and tyrosine 326. Tyrosine 244 serves as a coordination point for NAD(+).

It belongs to the Gfo/Idh/MocA family. Glycosyl hydrolase 109 subfamily. NAD(+) serves as cofactor. Post-translationally, predicted to be exported by the Tat system. The position of the signal peptide cleavage has not been experimentally proven.

Functionally, glycosidase. This is Glycosyl hydrolase family 109 protein 1 from Shewanella sp. (strain MR-4).